A 288-amino-acid polypeptide reads, in one-letter code: Phenazine biosynthesis-like domain-containing protein (288 aa).

Glu-46 is a catalytic residue.

The protein belongs to the PhzF family. Interacts with UNRIP/MAWD.

The protein is Phenazine biosynthesis-like domain-containing protein (PBLD) of Homo sapiens (Human).